A 289-amino-acid chain; its full sequence is Enoyl-CoA delta isomerase 1, mitochondrial (289 aa).

The N-terminal 28 residues, Met1–Arg28, are a transit peptide targeting the mitochondrion. An N6-acetyllysine; alternate modification is found at Lys48. At Lys48 the chain carries N6-succinyllysine; alternate. Lys71 carries the N6-succinyllysine modification. Lys76 is subject to N6-acetyllysine. Substrate is bound by residues Ala93–Leu97, Gly140, and Asn164. 4 positions are modified to N6-acetyllysine; alternate: Lys222, Lys229, Lys255, and Lys270. N6-succinyllysine; alternate is present on residues Lys222, Lys229, Lys255, and Lys270. Position 275 is an N6-succinyllysine (Lys275). Position 283 is an N6-acetyllysine; alternate (Lys283). Lys283 is modified (N6-succinyllysine; alternate).

It belongs to the enoyl-CoA hydratase/isomerase family. As to quaternary structure, homotrimer.

The protein localises to the mitochondrion matrix. It catalyses the reaction a (3Z)-enoyl-CoA = a 4-saturated (2E)-enoyl-CoA. It carries out the reaction a (3E)-enoyl-CoA = a 4-saturated (2E)-enoyl-CoA. The catalysed reaction is (3Z)-octenoyl-CoA = (2E)-octenoyl-CoA. The enzyme catalyses (2E)-tetradecenoyl-CoA = (3Z)-tetradecenoyl-CoA. It catalyses the reaction (3Z)-dodecenoyl-CoA = (2E)-dodecenoyl-CoA. It carries out the reaction (3Z)-hexenoyl-CoA = (2E)-hexenoyl-CoA. The catalysed reaction is (3Z)-decenoyl-CoA = (2E)-decenoyl-CoA. Its pathway is lipid metabolism; fatty acid beta-oxidation. Key enzyme of fatty acid beta-oxidation. Able to isomerize both 3-cis (3Z) and 3-trans (3E) double bonds into the 2-trans (2E) form in a range of enoyl-CoA species, with a preference for (3Z)-enoyl-CoAs over (3E)-enoyl-CoAs. The catalytic efficiency of this enzyme is not affected by the fatty acyl chain length. The polypeptide is Enoyl-CoA delta isomerase 1, mitochondrial (Mus musculus (Mouse)).